The primary structure comprises 74 residues: Large ribosomal subunit protein uL29 (74 aa).

This sequence belongs to the universal ribosomal protein uL29 family.

The chain is Large ribosomal subunit protein uL29 from Streptomyces avermitilis (strain ATCC 31267 / DSM 46492 / JCM 5070 / NBRC 14893 / NCIMB 12804 / NRRL 8165 / MA-4680).